We begin with the raw amino-acid sequence, 254 residues long: Bacteriorhodopsin-I (254 aa).

A propeptide spanning residues 1 to 6 is cleaved from the precursor; the sequence is MSQLAL. The residue at position 7 (Gln-7) is a Pyrrolidone carboxylic acid. 7 helical membrane passes run 16 to 36, 51 to 71, 91 to 111, 116 to 136, 144 to 164, 185 to 205, and 212 to 232; these read EGIW…YFIA, VITI…FFGF, YADW…LAGA, IGAL…ATLT, AFWT…VAVF, IILV…EGLA, and ETLL…FILL. Position 224 is an N6-(retinylidene)lysine (Lys-224).

The protein belongs to the archaeal/bacterial/fungal opsin family. In terms of processing, the covalent binding of retinal to the apoprotein, bacterioopsin, generates bacteriorhodopsin.

It localises to the cell membrane. Light-driven proton pump. In Haloquadratum walsbyi (strain DSM 16854 / JCM 12705 / C23), this protein is Bacteriorhodopsin-I (bop1).